Here is a 214-residue protein sequence, read N- to C-terminus: Leucyl/phenylalanyl-tRNA--protein transferase (214 aa).

The protein belongs to the L/F-transferase family.

The protein resides in the cytoplasm. The catalysed reaction is N-terminal L-lysyl-[protein] + L-leucyl-tRNA(Leu) = N-terminal L-leucyl-L-lysyl-[protein] + tRNA(Leu) + H(+). It catalyses the reaction N-terminal L-arginyl-[protein] + L-leucyl-tRNA(Leu) = N-terminal L-leucyl-L-arginyl-[protein] + tRNA(Leu) + H(+). It carries out the reaction L-phenylalanyl-tRNA(Phe) + an N-terminal L-alpha-aminoacyl-[protein] = an N-terminal L-phenylalanyl-L-alpha-aminoacyl-[protein] + tRNA(Phe). Functions in the N-end rule pathway of protein degradation where it conjugates Leu, Phe and, less efficiently, Met from aminoacyl-tRNAs to the N-termini of proteins containing an N-terminal arginine or lysine. The sequence is that of Leucyl/phenylalanyl-tRNA--protein transferase from Cereibacter sphaeroides (strain KD131 / KCTC 12085) (Rhodobacter sphaeroides).